Reading from the N-terminus, the 513-residue chain is Flavonoid 3',5'-hydroxylase (513 aa).

Position 446 (C446) interacts with heme.

This sequence belongs to the cytochrome P450 family. It depends on heme as a cofactor. As to expression, hypocotyl tissues.

The enzyme catalyses a 3',5'-unsubstituted flavanone + 2 reduced [NADPH--hemoprotein reductase] + 2 O2 = a 3',5'-dihydroxyflavanone + 2 oxidized [NADPH--hemoprotein reductase] + 2 H2O + 2 H(+). It functions in the pathway pigment biosynthesis; anthocyanin biosynthesis. Its function is as follows. Catalyzes the 3'5'-hydroxylation of naringenin and eriodictyol to form 5,7,3,'4',5'-pentahydroxyflavanone and 3',5'-hydroxylation of dihydrokaempferol and dihydroquercetin to form dihydromyricetin. The polypeptide is Flavonoid 3',5'-hydroxylase (CYP75A2) (Solanum melongena (Eggplant)).